A 334-amino-acid chain; its full sequence is Tetraacyldisaccharide 4'-kinase (334 aa).

Position 60 to 67 (60 to 67 (TVGGTGKT)) interacts with ATP.

Belongs to the LpxK family.

The catalysed reaction is a lipid A disaccharide + ATP = a lipid IVA + ADP + H(+). The protein operates within glycolipid biosynthesis; lipid IV(A) biosynthesis; lipid IV(A) from (3R)-3-hydroxytetradecanoyl-[acyl-carrier-protein] and UDP-N-acetyl-alpha-D-glucosamine: step 6/6. In terms of biological role, transfers the gamma-phosphate of ATP to the 4'-position of a tetraacyldisaccharide 1-phosphate intermediate (termed DS-1-P) to form tetraacyldisaccharide 1,4'-bis-phosphate (lipid IVA). This is Tetraacyldisaccharide 4'-kinase from Stutzerimonas stutzeri (strain A1501) (Pseudomonas stutzeri).